The sequence spans 545 residues: Chaperonin GroEL (545 aa).

ATP-binding positions include Thr30 to Pro33, Lys51, Asp87 to Thr91, Gly415, and Asp495.

It belongs to the chaperonin (HSP60) family. As to quaternary structure, forms a cylinder of 14 subunits composed of two heptameric rings stacked back-to-back. Interacts with the co-chaperonin GroES.

Its subcellular location is the cytoplasm. It carries out the reaction ATP + H2O + a folded polypeptide = ADP + phosphate + an unfolded polypeptide.. Functionally, together with its co-chaperonin GroES, plays an essential role in assisting protein folding. The GroEL-GroES system forms a nano-cage that allows encapsulation of the non-native substrate proteins and provides a physical environment optimized to promote and accelerate protein folding. This is Chaperonin GroEL from Shewanella denitrificans (strain OS217 / ATCC BAA-1090 / DSM 15013).